The primary structure comprises 144 residues: 3-hydroxyacyl-[acyl-carrier-protein] dehydratase FabZ (144 aa).

His52 is a catalytic residue.

It belongs to the thioester dehydratase family. FabZ subfamily.

It localises to the cytoplasm. The enzyme catalyses a (3R)-hydroxyacyl-[ACP] = a (2E)-enoyl-[ACP] + H2O. Functionally, involved in unsaturated fatty acids biosynthesis. Catalyzes the dehydration of short chain beta-hydroxyacyl-ACPs and long chain saturated and unsaturated beta-hydroxyacyl-ACPs. The chain is 3-hydroxyacyl-[acyl-carrier-protein] dehydratase FabZ from Syntrophomonas wolfei subsp. wolfei (strain DSM 2245B / Goettingen).